The following is a 382-amino-acid chain: Galactokinase (382 aa).

34-37 contacts substrate; that stretch reads EHTD. 124–130 is an ATP binding site; it reads GAGLSSS. Mg(2+)-binding residues include serine 130 and glutamate 162. Aspartate 174 functions as the Proton acceptor in the catalytic mechanism. Tyrosine 223 is a substrate binding site.

This sequence belongs to the GHMP kinase family. GalK subfamily.

The protein localises to the cytoplasm. It catalyses the reaction alpha-D-galactose + ATP = alpha-D-galactose 1-phosphate + ADP + H(+). It participates in carbohydrate metabolism; galactose metabolism. In terms of biological role, catalyzes the transfer of the gamma-phosphate of ATP to D-galactose to form alpha-D-galactose-1-phosphate (Gal-1-P). In Escherichia coli O7:K1 (strain IAI39 / ExPEC), this protein is Galactokinase.